A 234-amino-acid polypeptide reads, in one-letter code: UPF0502 protein BPSS1373 (234 aa).

Belongs to the UPF0502 family.

The sequence is that of UPF0502 protein BPSS1373 from Burkholderia pseudomallei (strain K96243).